A 433-amino-acid polypeptide reads, in one-letter code: Probable non-inhibitory serpin-Z5 (433 aa).

Positions 1–12 (MEPKEKKQKLDT) are enriched in basic and acidic residues. A disordered region spans residues 1–43 (MEPKEKKQKLDTSEVASPSLSKTHLKKKKTKKQKIRKSQEITS). The span at 23–36 (THLKKKKTKKQKIR) shows a compositional bias: basic residues. An RCL region spans residues 380-404 (GTEAVTFTAFRSAYLGCALVKPIDF).

The protein belongs to the serpin family. In terms of tissue distribution, weakly expressed during seedling development.

In Arabidopsis thaliana (Mouse-ear cress), this protein is Probable non-inhibitory serpin-Z5.